The sequence spans 452 residues: Trigger factor (452 aa).

In terms of domain architecture, PPIase FKBP-type spans 170 to 256 (DSIVKVDFVE…IKSIKKRDLP (87 aa)).

It belongs to the FKBP-type PPIase family. Tig subfamily.

It is found in the cytoplasm. The catalysed reaction is [protein]-peptidylproline (omega=180) = [protein]-peptidylproline (omega=0). Functionally, involved in protein export. Acts as a chaperone by maintaining the newly synthesized protein in an open conformation. Functions as a peptidyl-prolyl cis-trans isomerase. The polypeptide is Trigger factor (Borreliella afzelii (strain PKo) (Borrelia afzelii)).